Reading from the N-terminus, the 119-residue chain is NAD(P)H-quinone oxidoreductase subunit M (119 aa).

It belongs to the complex I NdhM subunit family. In terms of assembly, NDH-1 can be composed of about 15 different subunits; different subcomplexes with different compositions have been identified which probably have different functions.

The protein localises to the cellular thylakoid membrane. It carries out the reaction a plastoquinone + NADH + (n+1) H(+)(in) = a plastoquinol + NAD(+) + n H(+)(out). The enzyme catalyses a plastoquinone + NADPH + (n+1) H(+)(in) = a plastoquinol + NADP(+) + n H(+)(out). In terms of biological role, NDH-1 shuttles electrons from an unknown electron donor, via FMN and iron-sulfur (Fe-S) centers, to quinones in the respiratory and/or the photosynthetic chain. The immediate electron acceptor for the enzyme in this species is believed to be plastoquinone. Couples the redox reaction to proton translocation, and thus conserves the redox energy in a proton gradient. Cyanobacterial NDH-1 also plays a role in inorganic carbon-concentration. In Gloeothece citriformis (strain PCC 7424) (Cyanothece sp. (strain PCC 7424)), this protein is NAD(P)H-quinone oxidoreductase subunit M.